Here is a 317-residue protein sequence, read N- to C-terminus: MTETPLLSVRGLAKHYQTRSATLKILDNVSFDIARGEVVGLVGESGSGKTTIGRSVLRLIEPTAGQIMFDGADVATLSAREMRRQRRRMQYIFQDPFASLSPRMTIGEILMEGLNIQGIGTKAERLERARKALEQVELPPDTINRYAHEFSGGQRQRIGIARALTLEPDFIVADEPVSALDVSIQAQVVNLLRDLQQRLGLTMLFISHDLAVVEYICDRVIVLYLGRIMEIASSEDLYARPQHPYTRALLSAIPSPDPDARTERQILRGDIPSPANPPSGCVFRTRCPMAIDACATTVPQLREVRPGHFKACIRDNI.

The 244-residue stretch at 7-250 folds into the ABC transporter domain; it reads LSVRGLAKHY…PQHPYTRALL (244 aa). 43 to 50 is an ATP binding site; sequence GESGSGKT.

Belongs to the ABC transporter superfamily. The complex is composed of two ATP-binding proteins (BruAb2_0796 and BruAb2_0797), two transmembrane proteins (BruAb2_0794) and a solute-binding protein (BruAb2_0792).

It localises to the cell inner membrane. Probably part of an ABC transporter complex that could be involved in peptide import. Probably responsible for energy coupling to the transport system. The protein is Putative peptide import ATP-binding protein BruAb2_0797 of Brucella abortus biovar 1 (strain 9-941).